The chain runs to 428 residues: C4-dicarboxylate transport protein (428 aa).

The next 8 helical transmembrane spans lie at 8 to 28 (SLYF…HFYP), 44 to 64 (LIKM…IAGM), 76 to 96 (VALL…LIIV), 142 to 162 (IGAF…LFGF), 184 to 204 (VIFG…FGAM), 222 to 242 (LIIC…GSIA), 326 to 346 (IVHQ…AAGV), and 352 to 372 (IVLA…LALI).

Belongs to the dicarboxylate/amino acid:cation symporter (DAACS) (TC 2.A.23) family.

It localises to the cell inner membrane. In terms of biological role, responsible for the transport of dicarboxylates such as succinate, fumarate, and malate from the periplasm across the membrane. This is C4-dicarboxylate transport protein from Escherichia coli O139:H28 (strain E24377A / ETEC).